The following is a 55-amino-acid chain: Large ribosomal subunit protein bL33 (55 aa).

Belongs to the bacterial ribosomal protein bL33 family.

The polypeptide is Large ribosomal subunit protein bL33 (Paenarthrobacter aurescens (strain TC1)).